The primary structure comprises 87 residues: Retinal rod rhodopsin-sensitive cGMP 3',5'-cyclic phosphodiesterase subunit gamma (87 aa).

Residue Met1 is modified to N-acetylmethionine. Basic and acidic residues predominate over residues 1–12; that stretch reads MNLEPPKGEIRS. The disordered stretch occupies residues 1–55; that stretch reads MNLEPPKGEIRSATRVIGGPVTPRKGPPKFKQRQTRQFKSKPPKKGVQGFGDDIP. The span at 26–44 shows a compositional bias: basic residues; that stretch reads GPPKFKQRQTRQFKSKPPK.

The protein belongs to the rod/cone cGMP-PDE gamma subunit family. In terms of assembly, oligomer composed of two catalytic chains (alpha and beta), an inhibitory chain (gamma) and the delta chain.

It catalyses the reaction 3',5'-cyclic GMP + H2O = GMP + H(+). In terms of biological role, participates in processes of transmission and amplification of the visual signal. cGMP-PDEs are the effector molecules in G-protein-mediated phototransduction in vertebrate rods and cones. The chain is Retinal rod rhodopsin-sensitive cGMP 3',5'-cyclic phosphodiesterase subunit gamma (Pde6g) from Mus musculus (Mouse).